The chain runs to 246 residues: MGSLDKDNQDICPICLDPLKEAVSTDCRHLFCRMCLTQHMDKASVSGILSCPVCRKPCSEGVLGDNYICHTHQKRVRRFCEASGHLLCEECLQSPEHQSHTELSIENAISHYKERLNRRSRKLRKDLGNLQQLKAQEKKMLQALQVDCECHRLRTDLQNQDQTKEQLKALPWHWLDQEDLPEEVAKIFSFSEAVTQLSILVSGLERMAKDLDASTLKDASDLLDRSAPQKLEGLLSRVSPAGPKLS.

The RING-type zinc-finger motif lies at C12–R55. The B box-type zinc finger occupies G64–I105. Zn(2+) contacts are provided by C69, H72, C91, and H97. Residues I105–L170 are a coiled coil.

This sequence belongs to the TRIM/RBCC family. As to quaternary structure, interacts with NEDD8.

The enzyme catalyses S-ubiquitinyl-[E2 ubiquitin-conjugating enzyme]-L-cysteine + [acceptor protein]-L-lysine = [E2 ubiquitin-conjugating enzyme]-L-cysteine + N(6)-ubiquitinyl-[acceptor protein]-L-lysine.. Its function is as follows. E3 ubiquitin-protein ligase that plays a role in the limitation of the innate immune response. Mediates inhibition of the RLR signaling pathway by ubiquitinating RIGI and IFIH1 receptors, leading to their proteasomal degradation. Also promotes the neddylation of IKBKG/NEMO, stabilizing NFKBIA, and thereby inhibiting of NF-kappa-B nuclear translocation and activation. The polypeptide is E3 ubiquitin ligase TRIM40 (Trim40) (Mus musculus (Mouse)).